Consider the following 90-residue polypeptide: Bombyxin B-5 (90 aa).

Residues 1–20 form the signal peptide; that stretch reads MMKTAVMFILVVVISLTYSS. 3 cysteine pairs are disulfide-bonded: C30/C75, C42/C88, and C74/C79. The propeptide at 49–64 is c peptide like; it reads GGAQYAPYWQETYLRS.

This sequence belongs to the insulin family. As to quaternary structure, heterodimer of a B chain and an A chain linked by two disulfide bonds.

Its subcellular location is the secreted. In terms of biological role, brain peptide responsible for activation of prothoracic glands to produce ecdysone in insects. The protein is Bombyxin B-5 (BBXB5) of Bombyx mori (Silk moth).